The chain runs to 377 residues: Geranylgeranyl transferase type-1 subunit beta (377 aa).

PFTB repeat units follow at residues 144–186 (KEAC…YMLN), 193–234 (MKKA…CLMG), 245–284 (LNRI…KLLK), and 291–333 (FEKN…SLME). Geranylgeranyl diphosphate contacts are provided by residues 219–221 (HGG) and 263–266 (RPNK). Zn(2+) contacts are provided by Asp269 and Cys271. 272–275 (YSFW) lines the geranylgeranyl diphosphate pocket. Zn(2+) is bound at residue His321.

Belongs to the protein prenyltransferase subunit beta family. Heterodimer of FNTA and PGGT1B. PGGT1B mediates interaction with substrate peptides. The cofactor is Zn(2+). Mg(2+) serves as cofactor.

It catalyses the reaction geranylgeranyl diphosphate + L-cysteinyl-[protein] = S-geranylgeranyl-L-cysteinyl-[protein] + diphosphate. Its function is as follows. Catalyzes the transfer of a geranylgeranyl moiety from geranylgeranyl diphosphate to a cysteine at the fourth position from the C-terminus of proteins with the C-terminal sequence Cys-aliphatic-aliphatic-X. Known substrates include RAC1, RAC2, RAP1A and RAP1B. This is Geranylgeranyl transferase type-1 subunit beta (Pggt1b) from Rattus norvegicus (Rat).